Consider the following 141-residue polypeptide: Cytochrome c-type biogenesis protein CcmE (141 aa).

Residues 1-7 lie on the Cytoplasmic side of the membrane; the sequence is MQRKHKR. A helical; Signal-anchor for type II membrane protein transmembrane segment spans residues 8–28; it reads ILFVAVSFIALGCVSAFVLFE. Residues 29-141 lie on the Periplasmic side of the membrane; it reads LSKSISFFCT…SSDAAVIGSS (113 aa). Residues His121 and Tyr125 each contribute to the heme site.

It belongs to the CcmE/CycJ family.

It is found in the cell inner membrane. Heme chaperone required for the biogenesis of c-type cytochromes. Transiently binds heme delivered by CcmC and transfers the heme to apo-cytochromes in a process facilitated by CcmF and CcmH. This is Cytochrome c-type biogenesis protein CcmE from Anaplasma phagocytophilum (strain HZ).